Consider the following 174-residue polypeptide: 3-hydroxydecanoyl-[acyl-carrier-protein] dehydratase (174 aa).

His-73 is an active-site residue.

The protein belongs to the thioester dehydratase family. FabA subfamily. Homodimer.

It localises to the cytoplasm. It carries out the reaction a (3R)-hydroxyacyl-[ACP] = a (2E)-enoyl-[ACP] + H2O. The catalysed reaction is (3R)-hydroxydecanoyl-[ACP] = (2E)-decenoyl-[ACP] + H2O. It catalyses the reaction (2E)-decenoyl-[ACP] = (3Z)-decenoyl-[ACP]. Its pathway is lipid metabolism; fatty acid biosynthesis. Necessary for the introduction of cis unsaturation into fatty acids. Catalyzes the dehydration of (3R)-3-hydroxydecanoyl-ACP to E-(2)-decenoyl-ACP and then its isomerization to Z-(3)-decenoyl-ACP. Can catalyze the dehydratase reaction for beta-hydroxyacyl-ACPs with saturated chain lengths up to 16:0, being most active on intermediate chain length. The protein is 3-hydroxydecanoyl-[acyl-carrier-protein] dehydratase of Teredinibacter turnerae (strain ATCC 39867 / T7901).